Here is a 322-residue protein sequence, read N- to C-terminus: Rhomboid-like protein 16, chloroplastic (322 aa).

The transit peptide at 1–52 directs the protein to the chloroplast; sequence MHAIFCRRVAVGCSSPQLTKLVTKQASQSRHSLSHLLPFDLSSRFVPPYVVS. Helical transmembrane passes span 110-130, 166-186, 201-221, 238-258, 265-285, and 295-315; these read WING…AVFT, FSHV…YFGA, YFAG…LSVI, IGKL…MLLY, FGLM…LNII, and TLTS…WARI.

Belongs to the peptidase S54 family.

The protein resides in the plastid. It localises to the chloroplast membrane. Functionally, rhomboid-type serine protease that catalyzes intramembrane proteolysis. May cleave the plastid translocon component Tic40. The sequence is that of Rhomboid-like protein 16, chloroplastic from Arabidopsis thaliana (Mouse-ear cress).